The chain runs to 162 residues: NADH-quinone oxidoreductase subunit I 2 (162 aa).

4Fe-4S ferredoxin-type domains are found at residues 52-82 and 93-122; these read LRRY…IEAG and ERYD…EGPN. Residues Cys-62, Cys-65, Cys-68, Cys-72, Cys-102, Cys-105, Cys-108, and Cys-112 each coordinate [4Fe-4S] cluster.

The protein belongs to the complex I 23 kDa subunit family. NDH-1 is composed of 14 different subunits. Subunits NuoA, H, J, K, L, M, N constitute the membrane sector of the complex. It depends on [4Fe-4S] cluster as a cofactor.

The protein resides in the cell inner membrane. The catalysed reaction is a quinone + NADH + 5 H(+)(in) = a quinol + NAD(+) + 4 H(+)(out). In terms of biological role, NDH-1 shuttles electrons from NADH, via FMN and iron-sulfur (Fe-S) centers, to quinones in the respiratory chain. The immediate electron acceptor for the enzyme in this species is believed to be ubiquinone. Couples the redox reaction to proton translocation (for every two electrons transferred, four hydrogen ions are translocated across the cytoplasmic membrane), and thus conserves the redox energy in a proton gradient. In Rhodopseudomonas palustris (strain BisA53), this protein is NADH-quinone oxidoreductase subunit I 2.